The chain runs to 496 residues: Glutamyl-tRNA(Gln) amidotransferase subunit A (496 aa).

Residues K75 and S150 each act as charge relay system in the active site. Catalysis depends on S174, which acts as the Acyl-ester intermediate.

The protein belongs to the amidase family. GatA subfamily. Heterotrimer of A, B and C subunits.

The enzyme catalyses L-glutamyl-tRNA(Gln) + L-glutamine + ATP + H2O = L-glutaminyl-tRNA(Gln) + L-glutamate + ADP + phosphate + H(+). Its function is as follows. Allows the formation of correctly charged Gln-tRNA(Gln) through the transamidation of misacylated Glu-tRNA(Gln) in organisms which lack glutaminyl-tRNA synthetase. The reaction takes place in the presence of glutamine and ATP through an activated gamma-phospho-Glu-tRNA(Gln). This Burkholderia ambifaria (strain ATCC BAA-244 / DSM 16087 / CCUG 44356 / LMG 19182 / AMMD) (Burkholderia cepacia (strain AMMD)) protein is Glutamyl-tRNA(Gln) amidotransferase subunit A.